The sequence spans 180 residues: ATP synthase subunit delta (180 aa).

This sequence belongs to the ATPase delta chain family. F-type ATPases have 2 components, F(1) - the catalytic core - and F(0) - the membrane proton channel. F(1) has five subunits: alpha(3), beta(3), gamma(1), delta(1), epsilon(1). F(0) has three main subunits: a(1), b(2) and c(10-14). The alpha and beta chains form an alternating ring which encloses part of the gamma chain. F(1) is attached to F(0) by a central stalk formed by the gamma and epsilon chains, while a peripheral stalk is formed by the delta and b chains.

It is found in the cell membrane. Its function is as follows. F(1)F(0) ATP synthase produces ATP from ADP in the presence of a proton or sodium gradient. F-type ATPases consist of two structural domains, F(1) containing the extramembraneous catalytic core and F(0) containing the membrane proton channel, linked together by a central stalk and a peripheral stalk. During catalysis, ATP synthesis in the catalytic domain of F(1) is coupled via a rotary mechanism of the central stalk subunits to proton translocation. This protein is part of the stalk that links CF(0) to CF(1). It either transmits conformational changes from CF(0) to CF(1) or is implicated in proton conduction. This chain is ATP synthase subunit delta, found in Latilactobacillus sakei subsp. sakei (strain 23K) (Lactobacillus sakei subsp. sakei).